The primary structure comprises 344 residues: Holliday junction branch migration complex subunit RuvB (344 aa).

Residues M1–Y182 are large ATPase domain (RuvB-L). ATP-binding positions include I21, R22, G63, K66, T67, T68, E129–F131, R172, Y182, and R219. T67 provides a ligand contact to Mg(2+). The segment at P183 to E253 is small ATPAse domain (RuvB-S). Positions E256 to V344 are head domain (RuvB-H). DNA is bound by residues R311 and R316.

Belongs to the RuvB family. As to quaternary structure, homohexamer. Forms an RuvA(8)-RuvB(12)-Holliday junction (HJ) complex. HJ DNA is sandwiched between 2 RuvA tetramers; dsDNA enters through RuvA and exits via RuvB. An RuvB hexamer assembles on each DNA strand where it exits the tetramer. Each RuvB hexamer is contacted by two RuvA subunits (via domain III) on 2 adjacent RuvB subunits; this complex drives branch migration. In the full resolvosome a probable DNA-RuvA(4)-RuvB(12)-RuvC(2) complex forms which resolves the HJ.

The protein localises to the cytoplasm. It catalyses the reaction ATP + H2O = ADP + phosphate + H(+). Its function is as follows. The RuvA-RuvB-RuvC complex processes Holliday junction (HJ) DNA during genetic recombination and DNA repair, while the RuvA-RuvB complex plays an important role in the rescue of blocked DNA replication forks via replication fork reversal (RFR). RuvA specifically binds to HJ cruciform DNA, conferring on it an open structure. The RuvB hexamer acts as an ATP-dependent pump, pulling dsDNA into and through the RuvAB complex. RuvB forms 2 homohexamers on either side of HJ DNA bound by 1 or 2 RuvA tetramers; 4 subunits per hexamer contact DNA at a time. Coordinated motions by a converter formed by DNA-disengaged RuvB subunits stimulates ATP hydrolysis and nucleotide exchange. Immobilization of the converter enables RuvB to convert the ATP-contained energy into a lever motion, pulling 2 nucleotides of DNA out of the RuvA tetramer per ATP hydrolyzed, thus driving DNA branch migration. The RuvB motors rotate together with the DNA substrate, which together with the progressing nucleotide cycle form the mechanistic basis for DNA recombination by continuous HJ branch migration. Branch migration allows RuvC to scan DNA until it finds its consensus sequence, where it cleaves and resolves cruciform DNA. This chain is Holliday junction branch migration complex subunit RuvB, found in Chlorobium luteolum (strain DSM 273 / BCRC 81028 / 2530) (Pelodictyon luteolum).